Reading from the N-terminus, the 127-residue chain is MNGFLLVALGGAIGASLRHGVGLVAVRHLPLGWPWGTSFVNIAGSLAMGLLAGWLALKAEGASQEARLFLATGVLGGFTTFSAFSLEVATMLRSGETLKAGLYAGVSVLLGVSALFIGLWMARRIFA.

The next 3 membrane-spanning stretches (helical) occupy residues 37 to 57, 68 to 88, and 102 to 122; these read TSFVNIAGSLAMGLLAGWLAL, LFLATGVLGGFTTFSAFSLEV, and LYAGVSVLLGVSALFIGLWMA. Na(+) contacts are provided by Gly76 and Thr79.

The protein belongs to the fluoride channel Fluc/FEX (TC 1.A.43) family.

Its subcellular location is the cell inner membrane. The catalysed reaction is fluoride(in) = fluoride(out). Na(+) is not transported, but it plays an essential structural role and its presence is essential for fluoride channel function. Its function is as follows. Fluoride-specific ion channel. Important for reducing fluoride concentration in the cell, thus reducing its toxicity. This chain is Fluoride-specific ion channel FluC, found in Hyphomonas neptunium (strain ATCC 15444).